Consider the following 475-residue polypeptide: Cytochrome P450 monooxygenase opdE (475 aa).

A helical transmembrane segment spans residues valine 10–leucine 32. Position 457 (cysteine 457) interacts with heme.

The protein belongs to the cytochrome P450 family. The cofactor is heme.

The protein resides in the membrane. The protein operates within secondary metabolite biosynthesis. Cytochrome P450 monooxygenase; part of the gene cluster that mediates the biosynthesis of oxopyrrolidines, polyketide-amino acid hybrid compounds with feature structures of tetramic acid. Does not seem to play a role in oxopyrrolidines A and B biosynthesis. May be involved in further modifications of these oxopyrrolidines. The polypeptide is Cytochrome P450 monooxygenase opdE (Penicillium oxalicum (strain 114-2 / CGMCC 5302) (Penicillium decumbens)).